A 212-amino-acid chain; its full sequence is Cell division protein YtfB (212 aa).

The helical transmembrane segment at 34–50 threads the bilayer; sequence GIIIAAIVLVVGFLLPS. The interval 88–127 is disordered; sequence NDPDQVAPVAPEPIQEGQPEEQPQTTQTQPFQPDSGIDNQ. Low complexity predominate over residues 99 to 120; that stretch reads EPIQEGQPEEQPQTTQTQPFQP. The interval 117-212 is oapA; sequence PFQPDSGIDN…QPDGSFIRAR (96 aa).

Belongs to the OapA family.

The protein localises to the cell inner membrane. Its function is as follows. Cell division protein whose function is related to the generation of a transient cell wall structure. Function is linked to the late stages of cell division. The polypeptide is Cell division protein YtfB (ytfB) (Escherichia coli (strain K12)).